A 3898-amino-acid chain; its full sequence is Genome polyprotein (3898 aa).

Residues 1–168 enclose the Peptidase C53 domain; the sequence is MELNHFELLY…TDCPLWVTSC (168 aa). Residues E22, H49, and C69 each act as for N-terminal protease activity in the active site. Residues 112–138 are zinc-binding TRASH domain; the sequence is CEVTKRIGRVTGSDGKLYHIYVCIDGC. N-linked (GlcNAc...) asparagine; by host glycosylation occurs at N157. Positions 221–242 are disordered; sequence KGKVKGKNTQDGLYHNKNKPPE. 3 N-linked (GlcNAc...) asparagine; by host glycosylation sites follow: N269, N278, and N332. 2 disulfides stabilise this stretch: C305–C349 and C335–C336. N-linked (GlcNAc...) asparagine; by host glycans are attached at residues N362 and N367. 2 cysteine pairs are disulfide-bonded: C377–C422 and C381–C405. N-linked (GlcNAc...) asparagine; by host glycosylation is found at N410, N425, N500, and N594. C693 and C737 are disulfide-bonded. N-linked (GlcNAc...) asparagine; by host glycans are attached at residues N805, N810, N874, N918, and N949. The next 9 helical transmembrane spans lie at 1031–1051, 1070–1090, 1104–1124, 1140–1164, 1189–1209, 1217–1237, 1247–1267, 1281–1301, and 1360–1380; these read FIVL…LIVT, VVLI…YFLL, ILLL…VALL, QRLP…MLLA, LSTD…TYIS, LLQY…LKGV, LPSY…AVVT, VPTL…ILIL, and TMLP…WQFI. Positions 1441 to 1589 constitute a Peptidase C74 domain; sequence KELIIKHKVR…DLEHLGWVLR (149 aa). Residues H1447, E1461, and C1512 each act as for cysteine protease NS2 activity in the active site. A helical transmembrane segment spans residues 1568 to 1588; the sequence is MLLVGNLGTEVGDLEHLGWVL. The 174-residue stretch at 1590–1763 folds into the Peptidase S31 domain; the sequence is GPAVCKKVTE…LPIFEASSGR (174 aa). Residues H1658 and D1695 each act as charge relay system; for serine protease NS3 activity in the active site. An N-linked (GlcNAc...) asparagine; by host glycan is attached at N1713. S1752 acts as the Charge relay system; for serine protease NS3 activity in catalysis. The Helicase ATP-binding domain occupies 1802-1960; the sequence is ITTMNRGEFR…QKHPIEEYIA (159 aa). ATP is bound at residue 1815–1822; it reads LATGAGKT. The DEAH box signature appears at 1910-1913; the sequence is DEYH. The Helicase C-terminal domain maps to 1978–2179; that stretch reads GLKIPVEEMK…ELPMAVKNIM (202 aa). Residues N2134, N2217, N2419, N2494, N2787, N2815, and N2891 are each glycosylated (N-linked (GlcNAc...) asparagine; by host). Over residues 2968-2980 the composition is skewed to low complexity; sequence PTMTTGETPTTFT. The interval 2968 to 2987 is disordered; that stretch reads PTMTTGETPTTFTSSGPDPK. N-linked (GlcNAc...) asparagine; by host glycans are attached at residues N3103, N3211, and N3316. GTP contacts are provided by T3500 and L3502. Residues 3519–3642 form the RdRp catalytic domain; the sequence is PVAVSFDTKA…ITERALGEKF (124 aa). N3689 carries an N-linked (GlcNAc...) asparagine; by host glycan. Position 3697 (R3697) interacts with GTP. An N-linked (GlcNAc...) asparagine; by host glycan is attached at N3698. K3705 provides a ligand contact to GTP. N3794 carries an N-linked (GlcNAc...) asparagine; by host glycan.

It belongs to the pestivirus polyprotein family. Interacts (via N-terminus) with host SP1; this interaction induces proteasomal degradation of SP1 with subsequent down-regulation of HDAC1 and ISG15 expression thereby counteracting the host innate immunity. Interacts (via C-terminus) with host IRF3. In terms of assembly, interacts with host OS9. As to quaternary structure, homodimer; disulfide-linked. Interacts with host RPSA. Homodimer; disulfide-linked. Heterodimer with E1; disulfide-linked. In terms of assembly, homodimer; disulfide-linked. Heterodimer with E1; disulfide-linked. Interacts with host TRX2. Interacts with host receptor ADAM17 (via metalloproteinase domain); this interaction allows binding and probably entry of the virus into the host cell. Interacts with host ANXA2; this interaction allows binding and probably entry of the virus into the host cell. Interacts with host MERTK; this interaction allows binding and probably entry of the virus into the host cell. As to quaternary structure, interacts with host TRAF6; this interaction inhibits host NF-kappa-B pathway. Interacts with NS5B; this interaction enhances RNA-dependent RNA polymerase activity. Interacts with protein NS4A. Interacts with host RAB5, this interaction facilitates the formation of NS4B-related complex. Interacts with host FTH1; this interaction plays a positive role in viral anti-apoptosis. In terms of assembly, interacts with RNA-directed RNA polymerase. Interacts with host RSAD2; this interaction inhibits viral replication. As to quaternary structure, interacts with NS5A; this interaction promotes viral replication. Post-translationally, heavily glycosylated. In terms of processing, the viral RNA of pestiviruses is expressed as a single polyprotein which undergoes post-translational proteolytic processing resulting in the production of at least eleven individual proteins. The N-terminal protease cleaves itself from the nascent polyprotein autocatalytically and thereby generates the N-terminus of the adjacent viral capsid protein C. Cleavage between E2 and p7 is partial.

It is found in the virion. The protein localises to the host membrane. It localises to the virion membrane. The protein resides in the host cell surface. Its subcellular location is the host cytoplasm. It carries out the reaction Leu is conserved at position P1 for all four cleavage sites. Alanine is found at position P1' of the NS4A-NS4B cleavage site, whereas serine is found at position P1' of the NS3-NS4A, NS4B-NS5A and NS5A-NS5B cleavage sites.. It catalyses the reaction RNA(n) + a ribonucleoside 5'-triphosphate = RNA(n+1) + diphosphate. The catalysed reaction is a ribonucleoside 5'-triphosphate + H2O = a ribonucleoside 5'-diphosphate + phosphate + H(+). The enzyme catalyses ATP + H2O = ADP + phosphate + H(+). In terms of biological role, leader cysteine autoprotease that cleaves itself from the nascent polyprotein during translation of the viral mRNA. Once released, plays a role in the inhibition of host innate immune response by interacting with host IRF3 and inducing its proteasomal degradation. Its function is as follows. Packages viral RNA to form a viral nucleocapsid and thereby protects viral RNA. Also plays a role in transcription regulation. Protects the incoming virus against IFN-induced effectors. Functionally, plays a role in viral entry. Interacts with host RPSA that acts as a cellular attachment receptor for the virus. Also possesses intrinsic ribonuclease (RNase) activity that can inhibit the production of type I interferon and assist in the development of persistent infections. Cleaves preferentially NpU bonds. Binds to heparan sulfate on the host cells for entry. Plays a role in cell attachment and subsequent fusion of viral and cellular membranes. Therefore, mediates together with envelope glycoprotein E2 the viral entry. In terms of biological role, plays a role in cell attachment and subsequent fusion of viral and cellular membranes. Therefore, mediates together with envelope glycoprotein E1 the viral entry. Binds to host ADAM17 receptor for entry. Binds to host ANXA2 for entry. Binds to host MERTK for entry. Its function is as follows. Plays an essential role in the virus replication cycle by acting as a viroporin. Forms ion conductive pores, which alters the cell permeability allowing the transport of ions and other small molecules. Functionally, autoprotease that associates with the host chaperone JIV and cleaves the NS2-3 protein between NS2 and NS3. Also plays a role in the formation of infectious particles. Plays a role in the regulation of viral RNA replication. In terms of biological role, multifunctional protein that contains an N-terminal protease and a C-terminal helicase, playing essential roles in viral polyprotein processing and viral genome replication. The chymotrypsin-like serine protease activity utilizes NS4A as an essential cofactor and catalyzes the cleavage of the polyprotein leading to the release of NS4A, NS4B, NS5A, and NS5B. Plays a role in the inhibition of host NF-kappa-B activation by interacting with and inhibiting host TRAF6. Interacts with NS5B to enhance RNA-dependent RNA polymerase activity. Its function is as follows. Acts as a cofactor for the NS3 protease activity. Functionally, induces a specific membrane alteration that serves as a scaffold for the virus replication complex. Antagonizes host cell apoptosis by interacting with host ferritin heavy chain. The ORF4 protein physically binds host FTH1/FHC, resulting in the reduction of FTH1 protein levels in host cells. Reduction of FTH1 concentration further inhibits the accumulation of reactive oxygen in host cells, leading to reduced apoptosis. Regulates viral RNA replication by interacting with the 3'-untranslated region of viral RNA in a dose-dependent manner. At small concentrations promotes viral synthesis by interacting with the polymerase NS5B while at large concentrations, inhibits replication. In terms of biological role, replicates the viral (+) and (-) genome. The chain is Genome polyprotein from Sus scrofa (Pig).